The primary structure comprises 176 residues: MTKPNADSLMKIGQLKKPYGIKGWLWVFSETEEREAIFSYSPWWMKTATGFKPLTVTQWRRQGTGIVAQFEQVPDRNVAETMNGVSIWIDKDSLPSTEEDEYYWSDLVGLSVINKQDECLGTVKELFETGAHPIMKVVPSQDSIDDEPRMIPWHKQTVDVVDLAAGRMVVDWERDF.

A PRC barrel domain is found at 99 to 176 (EDEYYWSDLV…RMVVDWERDF (78 aa)).

Belongs to the RimM family. Binds ribosomal protein uS19.

The protein resides in the cytoplasm. Its function is as follows. An accessory protein needed during the final step in the assembly of 30S ribosomal subunit, possibly for assembly of the head region. Essential for efficient processing of 16S rRNA. May be needed both before and after RbfA during the maturation of 16S rRNA. It has affinity for free ribosomal 30S subunits but not for 70S ribosomes. The sequence is that of Ribosome maturation factor RimM from Psychrobacter sp. (strain PRwf-1).